A 208-amino-acid chain; its full sequence is Nitrate/nitrite response regulator protein homolog (208 aa).

One can recognise a Response regulatory domain in the interval 6-122 (KVLLIDDHPL…TLLEQIKRIA (117 aa)). D57 is subject to 4-aspartylphosphate. Residues 142–207 (EDNPLDSLTD…AATVLFFEQN (66 aa)) enclose the HTH luxR-type domain. Positions 166 to 185 (NKQIAAQLFISEETVKVHIR) form a DNA-binding region, H-T-H motif.

In terms of biological role, could activate the expression of a formate dehydrogenase operon and could repress the transcription of the fumarate reductase (frdABCD) operon. This is Nitrate/nitrite response regulator protein homolog (narP) from Haemophilus influenzae (strain ATCC 51907 / DSM 11121 / KW20 / Rd).